The primary structure comprises 477 residues: Minor capsid protein (477 aa).

It belongs to the closteroviridae minor capsid protein family.

Its subcellular location is the virion. Minor capsid protein that encapsidates the 5'-terminal portion of the viral genome. The polypeptide is Minor capsid protein (Vitis vinifera (Grape)).